A 156-amino-acid chain; its full sequence is Ribosomal RNA large subunit methyltransferase H (156 aa).

S-adenosyl-L-methionine contacts are provided by residues Leu-73, Gly-104, and 123 to 128 (LSALTL).

The protein belongs to the RNA methyltransferase RlmH family. In terms of assembly, homodimer.

The protein localises to the cytoplasm. It carries out the reaction pseudouridine(1915) in 23S rRNA + S-adenosyl-L-methionine = N(3)-methylpseudouridine(1915) in 23S rRNA + S-adenosyl-L-homocysteine + H(+). In terms of biological role, specifically methylates the pseudouridine at position 1915 (m3Psi1915) in 23S rRNA. The protein is Ribosomal RNA large subunit methyltransferase H of Shewanella frigidimarina (strain NCIMB 400).